A 368-amino-acid chain; its full sequence is Spermidine/putrescine import ATP-binding protein PotA (368 aa).

Residues 8 to 238 (IELRGVTKNF…PANLYVARFV (231 aa)) enclose the ABC transporter domain. 40–47 (GPSGCGKT) serves as a coordination point for ATP.

It belongs to the ABC transporter superfamily. Spermidine/putrescine importer (TC 3.A.1.11.1) family. The complex is composed of two ATP-binding proteins (PotA), two transmembrane proteins (PotB and PotC) and a solute-binding protein (PotD).

It is found in the cell inner membrane. It catalyses the reaction ATP + H2O + polyamine-[polyamine-binding protein]Side 1 = ADP + phosphate + polyamineSide 2 + [polyamine-binding protein]Side 1.. Its function is as follows. Part of the ABC transporter complex PotABCD involved in spermidine/putrescine import. Responsible for energy coupling to the transport system. The sequence is that of Spermidine/putrescine import ATP-binding protein PotA from Nitratidesulfovibrio vulgaris (strain ATCC 29579 / DSM 644 / CCUG 34227 / NCIMB 8303 / VKM B-1760 / Hildenborough) (Desulfovibrio vulgaris).